The following is a 501-amino-acid chain: Aspartyl/glutamyl-tRNA(Asn/Gln) amidotransferase subunit B (501 aa).

Belongs to the GatB/GatE family. GatB subfamily. Heterotrimer of A, B and C subunits.

It catalyses the reaction L-glutamyl-tRNA(Gln) + L-glutamine + ATP + H2O = L-glutaminyl-tRNA(Gln) + L-glutamate + ADP + phosphate + H(+). The enzyme catalyses L-aspartyl-tRNA(Asn) + L-glutamine + ATP + H2O = L-asparaginyl-tRNA(Asn) + L-glutamate + ADP + phosphate + 2 H(+). Its function is as follows. Allows the formation of correctly charged Asn-tRNA(Asn) or Gln-tRNA(Gln) through the transamidation of misacylated Asp-tRNA(Asn) or Glu-tRNA(Gln) in organisms which lack either or both of asparaginyl-tRNA or glutaminyl-tRNA synthetases. The reaction takes place in the presence of glutamine and ATP through an activated phospho-Asp-tRNA(Asn) or phospho-Glu-tRNA(Gln). The polypeptide is Aspartyl/glutamyl-tRNA(Asn/Gln) amidotransferase subunit B (Mycobacterium sp. (strain KMS)).